The primary structure comprises 349 residues: MSNKVRIALDAMGGDFGASVVVPGAAISLTRHPDSEFLLFGDSALIKKELEAHPALKAVSQVIHTDVAVSMHDKPSQALRRGRKVSSMWLALEAVKNGKADVAVSAGNTGALMAMARFCLRMLPGIDRPAIAAIWPTVRGDSIVLDLGASIGGDEHHLKALAVMGAATASVLFDLERPTVGLLNIGVEEIKGGEEIRAAADLIRAMAQPPFDFIGFVEADGIGKGAADVIVTEGFSGNIALKAAEGTARQIGEYLRAAMSSTLMSKIGYLFARGAFRALREKMDPNKSNGGVFLGLNGVVVKSHGGTNADGFAYAVDVGYDMVRNDLLTKINQSLHRNGAEAHGVAPAA.

Belongs to the PlsX family. Homodimer. Probably interacts with PlsY.

The protein localises to the cytoplasm. The catalysed reaction is a fatty acyl-[ACP] + phosphate = an acyl phosphate + holo-[ACP]. It participates in lipid metabolism; phospholipid metabolism. Functionally, catalyzes the reversible formation of acyl-phosphate (acyl-PO(4)) from acyl-[acyl-carrier-protein] (acyl-ACP). This enzyme utilizes acyl-ACP as fatty acyl donor, but not acyl-CoA. This is Phosphate acyltransferase from Rhodopseudomonas palustris (strain BisA53).